The sequence spans 346 residues: Holliday junction branch migration complex subunit RuvB (346 aa).

A compositionally biased stretch (polar residues) spans 1-11; sequence MTEQRTIASSA. A disordered region spans residues 1–20; sequence MTEQRTIASSATREDEAADA. Positions 1-183 are large ATPase domain (RuvB-L); sequence MTEQRTIASS…FGIVQRLEFY (183 aa). ATP-binding positions include I22, R23, G64, K67, T68, T69, 130 to 132, R173, Y183, and R220; that span reads EDF. T68 provides a ligand contact to Mg(2+). Residues 184–254 are small ATPAse domain (RuvB-S); it reads SPQELTRIVI…VAQAAMQMLK (71 aa). Residues 257-346 are head domain (RuvB-H); it reads PEGFDELDRR…PAIGEPGDLF (90 aa). Residues R293, R312, and R317 each contribute to the DNA site.

Belongs to the RuvB family. As to quaternary structure, homohexamer. Forms an RuvA(8)-RuvB(12)-Holliday junction (HJ) complex. HJ DNA is sandwiched between 2 RuvA tetramers; dsDNA enters through RuvA and exits via RuvB. An RuvB hexamer assembles on each DNA strand where it exits the tetramer. Each RuvB hexamer is contacted by two RuvA subunits (via domain III) on 2 adjacent RuvB subunits; this complex drives branch migration. In the full resolvosome a probable DNA-RuvA(4)-RuvB(12)-RuvC(2) complex forms which resolves the HJ.

It localises to the cytoplasm. The catalysed reaction is ATP + H2O = ADP + phosphate + H(+). Its function is as follows. The RuvA-RuvB-RuvC complex processes Holliday junction (HJ) DNA during genetic recombination and DNA repair, while the RuvA-RuvB complex plays an important role in the rescue of blocked DNA replication forks via replication fork reversal (RFR). RuvA specifically binds to HJ cruciform DNA, conferring on it an open structure. The RuvB hexamer acts as an ATP-dependent pump, pulling dsDNA into and through the RuvAB complex. RuvB forms 2 homohexamers on either side of HJ DNA bound by 1 or 2 RuvA tetramers; 4 subunits per hexamer contact DNA at a time. Coordinated motions by a converter formed by DNA-disengaged RuvB subunits stimulates ATP hydrolysis and nucleotide exchange. Immobilization of the converter enables RuvB to convert the ATP-contained energy into a lever motion, pulling 2 nucleotides of DNA out of the RuvA tetramer per ATP hydrolyzed, thus driving DNA branch migration. The RuvB motors rotate together with the DNA substrate, which together with the progressing nucleotide cycle form the mechanistic basis for DNA recombination by continuous HJ branch migration. Branch migration allows RuvC to scan DNA until it finds its consensus sequence, where it cleaves and resolves cruciform DNA. The protein is Holliday junction branch migration complex subunit RuvB of Xanthomonas campestris pv. campestris (strain ATCC 33913 / DSM 3586 / NCPPB 528 / LMG 568 / P 25).